A 367-amino-acid polypeptide reads, in one-letter code: MQTLKVELGERSYPIHIGEGLLDQPELLAPHIVGRQVAIVSNTTVAPLYLERLTQTLAGYNVLPIVLPDGEAFKNWETLQTIFDGLLTARHDRRTTVIALGGGVIGDMAGFAAACYQRGVNFIQIPTTLLSQVDSSVGGKTGINHPLGKNMVGAFYQPSVVLIDTTSLNTLPERELSAGLAEVIKYGLICDEPFLTWLEEHVDALRGLDQAALTVAIERSCAAKALVVGADERESGVRATLNLGHTFGHAIETHMGYGVWLHGEAVAAGTVMALEMSSRLGWISTQERDRGIRLFQRAGLPVVPPQEMTEDNFLEHMAIDKKVIDGRLRLVLLRQIGEAVITDDYPQEVLQATLVADYRALVDQLRG.

Residues 69-74 (DGEAFK), 103-107 (GVIGD), 127-128 (TT), lysine 140, and lysine 149 contribute to the NAD(+) site. Zn(2+)-binding residues include glutamate 182, histidine 245, and histidine 262.

Belongs to the sugar phosphate cyclases superfamily. Dehydroquinate synthase family. NAD(+) is required as a cofactor. Requires Co(2+) as cofactor. It depends on Zn(2+) as a cofactor.

The protein localises to the cytoplasm. The enzyme catalyses 7-phospho-2-dehydro-3-deoxy-D-arabino-heptonate = 3-dehydroquinate + phosphate. It functions in the pathway metabolic intermediate biosynthesis; chorismate biosynthesis; chorismate from D-erythrose 4-phosphate and phosphoenolpyruvate: step 2/7. Functionally, catalyzes the conversion of 3-deoxy-D-arabino-heptulosonate 7-phosphate (DAHP) to dehydroquinate (DHQ). This chain is 3-dehydroquinate synthase, found in Pseudomonas syringae pv. tomato (strain ATCC BAA-871 / DC3000).